The sequence spans 434 residues: Phosphomethylpyrimidine synthase (434 aa).

Residues asparagine 74, methionine 103, tyrosine 132, histidine 171, 193-195 (SRG), 234-237 (DGIR), and glutamate 273 each bind substrate. Histidine 277 serves as a coordination point for Zn(2+). Substrate is bound at residue tyrosine 300. Position 341 (histidine 341) interacts with Zn(2+). [4Fe-4S] cluster-binding residues include cysteine 417, cysteine 420, and cysteine 424.

The protein belongs to the ThiC family. Homodimer. It depends on [4Fe-4S] cluster as a cofactor.

It carries out the reaction 5-amino-1-(5-phospho-beta-D-ribosyl)imidazole + S-adenosyl-L-methionine = 4-amino-2-methyl-5-(phosphooxymethyl)pyrimidine + CO + 5'-deoxyadenosine + formate + L-methionine + 3 H(+). It participates in cofactor biosynthesis; thiamine diphosphate biosynthesis. Functionally, catalyzes the synthesis of the hydroxymethylpyrimidine phosphate (HMP-P) moiety of thiamine from aminoimidazole ribotide (AIR) in a radical S-adenosyl-L-methionine (SAM)-dependent reaction. The sequence is that of Phosphomethylpyrimidine synthase from Desulfotalea psychrophila (strain LSv54 / DSM 12343).